A 179-amino-acid polypeptide reads, in one-letter code: Pyridoxal 5'-phosphate synthase subunit PdxT (179 aa).

Residue 48–50 participates in L-glutamine binding; it reads GES. Cys79 (nucleophile) is an active-site residue. Residues Arg101 and 127-128 each bind L-glutamine; that span reads IR. Active-site charge relay system residues include His163 and Glu165.

The protein belongs to the glutaminase PdxT/SNO family. As to quaternary structure, in the presence of PdxS, forms a dodecamer of heterodimers. Only shows activity in the heterodimer.

The catalysed reaction is aldehydo-D-ribose 5-phosphate + D-glyceraldehyde 3-phosphate + L-glutamine = pyridoxal 5'-phosphate + L-glutamate + phosphate + 3 H2O + H(+). It carries out the reaction L-glutamine + H2O = L-glutamate + NH4(+). Its pathway is cofactor biosynthesis; pyridoxal 5'-phosphate biosynthesis. Functionally, catalyzes the hydrolysis of glutamine to glutamate and ammonia as part of the biosynthesis of pyridoxal 5'-phosphate. The resulting ammonia molecule is channeled to the active site of PdxS. In Francisella philomiragia subsp. philomiragia (strain ATCC 25017 / CCUG 19701 / FSC 153 / O#319-036), this protein is Pyridoxal 5'-phosphate synthase subunit PdxT.